Consider the following 324-residue polypeptide: Chlorophyllase-1 (324 aa).

A GXSXG motif is present at residues G136 to G140. The Nucleophile role is filled by S138. Active-site charge relay system residues include D168 and H243.

It belongs to the AB hydrolase superfamily. Lipase family. In terms of tissue distribution, expressed in seedlings, leaves, flowers and siliques, but not in roots.

It is found in the cytoplasm. It localises to the cytosol. The enzyme catalyses a chlorophyll + H2O = a chlorophyllide + phytol + H(+). It catalyses the reaction chlorophyll a + H2O = phytol + chlorophyllide a + H(+). It functions in the pathway porphyrin-containing compound metabolism; chlorophyll degradation. Its function is as follows. Catalyzes the hydrolysis of ester bond in chlorophyll to yield chlorophyllide and phytol. Shows a preferential activity toward chlorophyll a. Does not seem to be required for chlorophyll degradation during senescence. May modulate the balance between different plant defense pathways. The sequence is that of Chlorophyllase-1 from Arabidopsis thaliana (Mouse-ear cress).